Reading from the N-terminus, the 644-residue chain is Chaperone protein DnaK (644 aa).

Position 199 is a phosphothreonine; by autocatalysis (Thr-199). Residues 589–644 (QALAEASHKLAEKMYSQGQGPQAGPGEEPSGQSGGTEKPVEGEVVDAEFEEVKNKK) form a disordered region. Residues 604-619 (SQGQGPQAGPGEEPSG) show a composition bias toward low complexity.

The protein belongs to the heat shock protein 70 family.

Its function is as follows. Acts as a chaperone. The polypeptide is Chaperone protein DnaK (Nitrosospira multiformis (strain ATCC 25196 / NCIMB 11849 / C 71)).